We begin with the raw amino-acid sequence, 419 residues long: Effector protein BipC (419 aa).

2 disordered regions span residues V62–G91 and L338–Q402. 2 stretches are compositionally biased toward basic and acidic residues: residues E71–G91 and T380–A392.

The protein belongs to the SctB/SipC family.

It localises to the secreted. The polypeptide is Effector protein BipC (bipC) (Burkholderia mallei (strain NCTC 10247)).